The chain runs to 89 residues: Putative membrane protein insertion efficiency factor (89 aa).

The disordered stretch occupies residues 68–89 (VPPPNSDARNAPHEAEASSHRL). The segment covering 77-89 (NAPHEAEASSHRL) has biased composition (basic and acidic residues).

This sequence belongs to the UPF0161 family.

The protein localises to the cell inner membrane. In terms of biological role, could be involved in insertion of integral membrane proteins into the membrane. This Burkholderia thailandensis (strain ATCC 700388 / DSM 13276 / CCUG 48851 / CIP 106301 / E264) protein is Putative membrane protein insertion efficiency factor.